Reading from the N-terminus, the 237-residue chain is tRNA (guanine-N(7)-)-methyltransferase (237 aa).

4 residues coordinate S-adenosyl-L-methionine: glutamate 68, glutamate 93, aspartate 120, and aspartate 143. Aspartate 143 is an active-site residue. Substrate-binding positions include lysine 147, aspartate 179, and 216–219 (TKFE).

It belongs to the class I-like SAM-binding methyltransferase superfamily. TrmB family.

The catalysed reaction is guanosine(46) in tRNA + S-adenosyl-L-methionine = N(7)-methylguanosine(46) in tRNA + S-adenosyl-L-homocysteine. Its pathway is tRNA modification; N(7)-methylguanine-tRNA biosynthesis. Its function is as follows. Catalyzes the formation of N(7)-methylguanine at position 46 (m7G46) in tRNA. The chain is tRNA (guanine-N(7)-)-methyltransferase from Shewanella piezotolerans (strain WP3 / JCM 13877).